Reading from the N-terminus, the 259-residue chain is Dihydroorotate dehydrogenase B (NAD(+)), electron transfer subunit (259 aa).

The region spanning 2-102 is the FAD-binding FR-type domain; it reads MQKQNMIVVN…LGPLGHGFPV (101 aa). FAD contacts are provided by residues 53–56, 70–72, and 77–78; these read RPIS, LYR, and GT. Cys-221, Cys-226, Cys-229, and Cys-246 together coordinate [2Fe-2S] cluster.

It belongs to the PyrK family. Heterotetramer of 2 PyrK and 2 PyrD type B subunits. [2Fe-2S] cluster serves as cofactor. It depends on FAD as a cofactor.

The protein operates within pyrimidine metabolism; UMP biosynthesis via de novo pathway; orotate from (S)-dihydroorotate (NAD(+) route): step 1/1. In terms of biological role, responsible for channeling the electrons from the oxidation of dihydroorotate from the FMN redox center in the PyrD type B subunit to the ultimate electron acceptor NAD(+). The chain is Dihydroorotate dehydrogenase B (NAD(+)), electron transfer subunit from Bacillus cereus (strain Q1).